A 353-amino-acid polypeptide reads, in one-letter code: Photosystem II D2 protein (353 aa).

Threonine 2 bears the N-acetylthreonine mark. At threonine 2 the chain carries Phosphothreonine. A helical transmembrane segment spans residues 41–61 (TAYFALGGWFTGTTFVTSWYT). Histidine 118 serves as a coordination point for chlorophyll a. A helical membrane pass occupies residues 125–141 (GFMLRQFELARSVQLRP). 2 residues coordinate pheophytin a: glutamine 130 and asparagine 143. The chain crosses the membrane as a helical span at residues 153-166 (VFVSVFLIYPLGQS). Histidine 198 contributes to the chlorophyll a binding site. The helical transmembrane segment at 208–228 (AALLCAIHGATVENTLFEDGD) threads the bilayer. 2 residues coordinate a plastoquinone: histidine 215 and phenylalanine 262. A Fe cation-binding site is contributed by histidine 215. Histidine 269 provides a ligand contact to Fe cation. Residues 279 to 295 (GLWMSAIGVVGLALNLR) traverse the membrane as a helical segment.

This sequence belongs to the reaction center PufL/M/PsbA/D family. PSII is composed of 1 copy each of membrane proteins PsbA, PsbB, PsbC, PsbD, PsbE, PsbF, PsbH, PsbI, PsbJ, PsbK, PsbL, PsbM, PsbT, PsbX, PsbY, PsbZ, Psb30/Ycf12, at least 3 peripheral proteins of the oxygen-evolving complex and a large number of cofactors. It forms dimeric complexes. The D1/D2 heterodimer binds P680, chlorophylls that are the primary electron donor of PSII, and subsequent electron acceptors. It shares a non-heme iron and each subunit binds pheophytin, quinone, additional chlorophylls, carotenoids and lipids. There is also a Cl(-1) ion associated with D1 and D2, which is required for oxygen evolution. The PSII complex binds additional chlorophylls, carotenoids and specific lipids. serves as cofactor.

The protein resides in the plastid. It is found in the chloroplast thylakoid membrane. It catalyses the reaction 2 a plastoquinone + 4 hnu + 2 H2O = 2 a plastoquinol + O2. In terms of biological role, photosystem II (PSII) is a light-driven water:plastoquinone oxidoreductase that uses light energy to abstract electrons from H(2)O, generating O(2) and a proton gradient subsequently used for ATP formation. It consists of a core antenna complex that captures photons, and an electron transfer chain that converts photonic excitation into a charge separation. The D1/D2 (PsbA/PsbD) reaction center heterodimer binds P680, the primary electron donor of PSII as well as several subsequent electron acceptors. D2 is needed for assembly of a stable PSII complex. The protein is Photosystem II D2 protein of Adiantum capillus-veneris (Maidenhair fern).